Consider the following 346-residue polypeptide: tRNA N6-adenosine threonylcarbamoyltransferase (346 aa).

Fe cation is bound by residues histidine 111 and histidine 115. Substrate-binding positions include 134–138 (LVSGG), aspartate 167, glycine 180, and asparagine 279. A Fe cation-binding site is contributed by aspartate 307.

Belongs to the KAE1 / TsaD family. It depends on Fe(2+) as a cofactor.

The protein resides in the cytoplasm. The enzyme catalyses L-threonylcarbamoyladenylate + adenosine(37) in tRNA = N(6)-L-threonylcarbamoyladenosine(37) in tRNA + AMP + H(+). Its function is as follows. Required for the formation of a threonylcarbamoyl group on adenosine at position 37 (t(6)A37) in tRNAs that read codons beginning with adenine. Is involved in the transfer of the threonylcarbamoyl moiety of threonylcarbamoyl-AMP (TC-AMP) to the N6 group of A37, together with TsaE and TsaB. TsaD likely plays a direct catalytic role in this reaction. The protein is tRNA N6-adenosine threonylcarbamoyltransferase of Burkholderia lata (strain ATCC 17760 / DSM 23089 / LMG 22485 / NCIMB 9086 / R18194 / 383).